A 1393-amino-acid polypeptide reads, in one-letter code: DNA-directed RNA polymerase subunit beta (1393 aa).

It belongs to the RNA polymerase beta chain family. The RNAP catalytic core consists of 2 alpha, 1 beta, 1 beta' and 1 omega subunit. When a sigma factor is associated with the core the holoenzyme is formed, which can initiate transcription.

The enzyme catalyses RNA(n) + a ribonucleoside 5'-triphosphate = RNA(n+1) + diphosphate. DNA-dependent RNA polymerase catalyzes the transcription of DNA into RNA using the four ribonucleoside triphosphates as substrates. The protein is DNA-directed RNA polymerase subunit beta of Rhodospirillum rubrum (strain ATCC 11170 / ATH 1.1.1 / DSM 467 / LMG 4362 / NCIMB 8255 / S1).